The chain runs to 387 residues: MEQINSNKKHSNRRKYFSLLAVVLFIAFSGAYAYWSMELEDMISTDDAYVTGNADPISAQVSGSVTVVNHKDTNYVRQGDILVSLDKTDATIALNKAKNNLANIVRQTNKLYLQDKQYSAEVASARIQYQQSLEDYNRRVPLAKQGVISKETLEHTKDTLISSKAALNAAIQAYKANKALVMNTPLNRQPQVVEAADATKEAWLALKRTDIKSPVTGYIAQRSVQVGETVSPGQSLMAVVPARQMWVNANFKETQLTDVRIGQSVNIISDLYGENVVFHGRVTGINMGTGNAFSLLPAQNATGNWIKIVQRVPVEVSLDPKELMEHPLRIGLSMTATIDTKNEDIAEMPELASTVTSMPAYTSKALVIDTSPIEKEISNIISHNGQL.

The Cytoplasmic portion of the chain corresponds to 1–16 (MEQINSNKKHSNRRKY). The helical transmembrane segment at 17–37 (FSLLAVVLFIAFSGAYAYWSM) threads the bilayer. At 38–387 (ELEDMISTDD…SNIISHNGQL (350 aa)) the chain is on the periplasmic side.

This sequence belongs to the membrane fusion protein (MFP) (TC 8.A.1) family. Part of the tripartite efflux system EmrYK-TolC, which is composed of an inner membrane transporter, EmrY, a membrane fusion protein, EmrK, and an outer membrane component, TolC. The complex forms a large protein conduit and can translocate molecules across both the inner and outer membranes.

It localises to the cell inner membrane. Part of the tripartite efflux system EmrYK-TolC, which confers resistance to various drugs. The protein is Probable multidrug resistance protein EmrK (emrK) of Escherichia coli (strain K12).